Here is a 267-residue protein sequence, read N- to C-terminus: tRNA pseudouridine synthase A (267 aa).

Catalysis depends on aspartate 51, which acts as the Nucleophile. Tyrosine 109 contributes to the substrate binding site.

Belongs to the tRNA pseudouridine synthase TruA family. Homodimer.

The catalysed reaction is uridine(38/39/40) in tRNA = pseudouridine(38/39/40) in tRNA. Functionally, formation of pseudouridine at positions 38, 39 and 40 in the anticodon stem and loop of transfer RNAs. This is tRNA pseudouridine synthase A from Staphylococcus epidermidis (strain ATCC 35984 / DSM 28319 / BCRC 17069 / CCUG 31568 / BM 3577 / RP62A).